The chain runs to 543 residues: Dipeptide-binding protein DppE (543 aa).

An N-terminal signal peptide occupies residues 1 to 22 (MKRVKKLWGMGLALGLSFALMG). Cysteine 23 carries N-palmitoyl cysteine lipidation. Cysteine 23 carries the S-diacylglycerol cysteine lipid modification.

The protein belongs to the bacterial solute-binding protein 5 family.

Its subcellular location is the cell membrane. Functionally, probably part of the ABC transporter DppBCDE involved in dipeptide transport. In Bacillus subtilis (strain 168), this protein is Dipeptide-binding protein DppE (dppE).